Here is a 230-residue protein sequence, read N- to C-terminus: MSGGKTQPPTGPRGKVVMLKTARKRSVASQRWLTRQLNDPYVAAAKAQGWRSRAAFKLIELDDKFGLISKGSRVIDLGAAPGGWTQVAMKRGAAVVVGVDLLPVDPVPGATLIQGDFNDDDMPARLSSLMGGKADLVMSDMAPNTTGHAATDHMRIIALTELALHFAFDALAPGGAFVAKVFQGGSEKQLLEPMKQRFASVRHAKPASSRKESSELYVVAKGFRPNGLQD.

S-adenosyl-L-methionine is bound by residues Gly82, Trp84, Asp100, Asp116, and Asp140. Lys180 functions as the Proton acceptor in the catalytic mechanism.

Belongs to the class I-like SAM-binding methyltransferase superfamily. RNA methyltransferase RlmE family.

Its subcellular location is the cytoplasm. It carries out the reaction uridine(2552) in 23S rRNA + S-adenosyl-L-methionine = 2'-O-methyluridine(2552) in 23S rRNA + S-adenosyl-L-homocysteine + H(+). Functionally, specifically methylates the uridine in position 2552 of 23S rRNA at the 2'-O position of the ribose in the fully assembled 50S ribosomal subunit. This chain is Ribosomal RNA large subunit methyltransferase E, found in Granulibacter bethesdensis (strain ATCC BAA-1260 / CGDNIH1).